A 301-amino-acid polypeptide reads, in one-letter code: Protoheme IX farnesyltransferase (301 aa).

8 helical membrane-spanning segments follow: residues 25–45 (VTQL…PGMV), 47–67 (WTPL…AFAI), 97–117 (ILLF…TFAN), 119–139 (LTMW…TLLL), 147–167 (IVIG…AVTG), 173–193 (AWIL…ALAL), 235–255 (FISG…GALF), and 279–299 (IVYL…RVLI).

It belongs to the UbiA prenyltransferase family. Protoheme IX farnesyltransferase subfamily.

Its subcellular location is the cell inner membrane. The enzyme catalyses heme b + (2E,6E)-farnesyl diphosphate + H2O = Fe(II)-heme o + diphosphate. The protein operates within porphyrin-containing compound metabolism; heme O biosynthesis; heme O from protoheme: step 1/1. Converts heme B (protoheme IX) to heme O by substitution of the vinyl group on carbon 2 of heme B porphyrin ring with a hydroxyethyl farnesyl side group. The protein is Protoheme IX farnesyltransferase of Paraburkholderia xenovorans (strain LB400).